A 245-amino-acid polypeptide reads, in one-letter code: Homeobox protein Hox-A4a (245 aa).

Positions 34–99 (DYYERPKDPG…HGPRLTTESC (66 aa)) are disordered. The segment covering 35–51 (YYERPKDPGFPHHEEAS) has biased composition (basic and acidic residues). Composition is skewed to polar residues over residues 53–73 (PRSN…NDLN) and 82–99 (QPQS…TESC). An Antp-type hexapeptide motif is present at residues 126–131 (VYPWMK). Residues 147-206 (PKRSRTAYTRQQALELEKEFHFNRYLTRRRRVEIAHTMCLSERQVKIWFQNRRMKWKKDH) constitute a DNA-binding region (homeobox). A disordered region spans residues 205–245 (DHKLPNTKIRSSSSAPSNHHVKTDATQQQQTLLPTPCSSNL). Over residues 212–221 (KIRSSSSAPS) the composition is skewed to polar residues. Residues 230 to 245 (TQQQQTLLPTPCSSNL) show a composition bias toward low complexity.

It belongs to the Antp homeobox family. Deformed subfamily.

The protein localises to the nucleus. Its function is as follows. Sequence-specific transcription factor which is part of a developmental regulatory system that provides cells with specific positional identities on the anterior-posterior axis. The sequence is that of Homeobox protein Hox-A4a (hoxa4a) from Danio rerio (Zebrafish).